Reading from the N-terminus, the 631-residue chain is RNA polymerase sigma factor RpoD (631 aa).

The tract at residues 395–465 is sigma-70 factor domain-2; it reads LIKANLRLVV…TRSISDQART (71 aa). Residues 419–422 carry the Interaction with polymerase core subunit RpoC motif; that stretch reads DLVQ. The sigma-70 factor domain-3 stretch occupies residues 474–550; that stretch reads EQINRLNRET…DKAIKNPANH (77 aa). Residues 563-616 are sigma-70 factor domain-4; the sequence is ILGTLPEREQEVVKMRFGLEDGYSLTLEEVGLHFNVTRERIRQIESKALRRLKN. Residues 589 to 608 constitute a DNA-binding region (H-T-H motif); that stretch reads LEEVGLHFNVTRERIRQIES.

It belongs to the sigma-70 factor family. RpoD/SigA subfamily. Interacts transiently with the RNA polymerase catalytic core.

Its subcellular location is the cytoplasm. Sigma factors are initiation factors that promote the attachment of RNA polymerase to specific initiation sites and are then released. This sigma factor is the primary sigma factor during exponential growth. This Borreliella burgdorferi (strain ATCC 35210 / DSM 4680 / CIP 102532 / B31) (Borrelia burgdorferi) protein is RNA polymerase sigma factor RpoD.